A 1117-amino-acid polypeptide reads, in one-letter code: Rhoptry apical surface protein 3 (1117 aa).

Positions 1–12 (MENRPRQQTSGH) are enriched in polar residues. 8 disordered regions span residues 1–27 (MENR…SRPG), 47–243 (NHER…SHFT), 258–301 (DSER…NKGI), 325–398 (SDFK…SLST), 415–442 (WNHA…FLAA), 490–572 (AEAV…ESEL), 600–619 (RPLL…ELRS), and 654–736 (QDGT…RLQG). Composition is skewed to basic and acidic residues over residues 83–100 (DSNH…DSQK), 197–209 (TPLR…RHVS), and 275–300 (MKPK…DNKG). 2 stretches are compositionally biased toward low complexity: residues 418 to 442 (ASPG…FLAA) and 490 to 508 (AEAV…GDSS). Residues 510–520 (ESDHSGRERSR) are compositionally biased toward basic and acidic residues. The segment covering 530 to 540 (NEITTMRSQRS) has biased composition (polar residues). A compositionally biased stretch (basic and acidic residues) spans 546–555 (FSREPERESD). Polar residues predominate over residues 557 to 569 (GEMTPTGETSGSE). Basic and acidic residues predominate over residues 724 to 734 (DADRKQEEKRL). One can recognise a BSD domain in the interval 752–788 (MLSVDRRLRKLHSDTAVRRMGETEFWKLYFYQVFLLM). The segment covering 829 to 838 (QTSGFTESDT) has biased composition (polar residues). 5 disordered regions span residues 829-848 (QTSG…YGFA), 858-891 (IIPP…APEQ), 909-964 (RSPS…GDSP), 1031-1066 (SSSQ…PSHL), and 1095-1117 (GTCG…GARA). Residues 839 to 848 (SSPSPSYGFA) show a composition bias toward low complexity. Residues 909–931 (RSPSLSSSSSGTTSVSARGTGSS) show a composition bias toward low complexity. The span at 1031 to 1044 (SSSQVNGRVSTSRG) shows a compositional bias: polar residues. Composition is skewed to basic and acidic residues over residues 1046-1062 (MGED…RLEG) and 1108-1117 (KGKEVQGARA).

In terms of assembly, interacts with RASP2.

It is found in the cytoplasmic vesicle. It localises to the secretory vesicle. The protein localises to the rhoptry membrane. The polypeptide is Rhoptry apical surface protein 3 (Toxoplasma gondii (strain ATCC 50853 / GT1)).